We begin with the raw amino-acid sequence, 84 residues long: uncharacterized protein (84 aa).

This is an uncharacterized protein from Helicobacter pylori (strain ATCC 700392 / 26695) (Campylobacter pylori).